Here is a 337-residue protein sequence, read N- to C-terminus: Beta-glucosidase-like protein NCA3, mitochondrial (337 aa).

The span at Glu57–Ser67 shows a compositional bias: low complexity. Residues Glu57–Gly84 are disordered. The span at Ser68–Gly80 shows a compositional bias: basic and acidic residues.

It belongs to the SUN family.

The protein localises to the mitochondrion. Functionally, involved in the mitochondrial expression of subunits 6 and 8 of the F0-F1 ATP synthase. In Saccharomyces cerevisiae (strain ATCC 204508 / S288c) (Baker's yeast), this protein is Beta-glucosidase-like protein NCA3, mitochondrial (NCA3).